The sequence spans 291 residues: Putative phosphatase MG263 (291 aa).

Aspartate 11 (nucleophile) is an active-site residue. Aspartate 11 contacts Mg(2+). Leucine 12 serves as a coordination point for phosphate. Aspartate 13 contributes to the Mg(2+) binding site. Residues threonine 60 to glycine 61 and lysine 217 each bind phosphate. Mg(2+) is bound at residue aspartate 241. Asparagine 244 contacts phosphate.

Belongs to the HAD-like hydrolase superfamily. Cof family. Requires Mg(2+) as cofactor.

This chain is Putative phosphatase MG263, found in Mycoplasma genitalium (strain ATCC 33530 / DSM 19775 / NCTC 10195 / G37) (Mycoplasmoides genitalium).